The sequence spans 640 residues: Probable potassium transport system protein Kup 2 (640 aa).

The next 12 membrane-spanning stretches (helical) occupy residues 19-39 (LFSSTTFLLALGSLGVVYGDI), 67-87 (VLSLVFWSMTMVICVKYVVFV), 118-138 (GVVAFAATLGASLLYGDGVIT), 155-175 (EAAKPLVVPLTCVVLLALFLV), 181-201 (GVIGNVFGPIMIVWFVTIAAL), 230-250 (FVGVVVLGSVVLCITGGEALY), 265-285 (WLGLAFPALLLNYFGQGALLL), 307-327 (MVCLSTIATVIASQAMISGVF), 355-375 (VYIPEVNYLLMIACLGLVLVF), 384-404 (AYGIAVTADMALTSILFFFVI), 415-435 (AVPLLVLFLFFDLSYFGANLF), and 437-457 (IFDGGWITLTIAAIVATSMIT).

This sequence belongs to the HAK/KUP transporter (TC 2.A.72) family.

It localises to the cell inner membrane. The enzyme catalyses K(+)(in) + H(+)(in) = K(+)(out) + H(+)(out). Transport of potassium into the cell. Likely operates as a K(+):H(+) symporter. This is Probable potassium transport system protein Kup 2 from Syntrophobacter fumaroxidans (strain DSM 10017 / MPOB).